The chain runs to 362 residues: Stress response regulator protein 1 (362 aa).

2 disordered regions span residues 1 to 39 (MTRL…SLVQ) and 163 to 188 (TLKS…ETKT). Over residues 19 to 39 (PSQLLHSASLSSSPSSPSLVQ) the composition is skewed to low complexity. The Response regulatory domain maps to 209–327 (KFLLVDDNLI…LDFMANVIDE (119 aa)). Position 260 is a 4-aspartylphosphate (aspartate 260).

Functionally, required for stress adaptation, morphogenesis and virulence. The polypeptide is Stress response regulator protein 1 (SRR1) (Lodderomyces elongisporus (strain ATCC 11503 / CBS 2605 / JCM 1781 / NBRC 1676 / NRRL YB-4239) (Yeast)).